We begin with the raw amino-acid sequence, 345 residues long: Dihydroorotase (345 aa).

Positions 13 and 15 each coordinate Zn(2+). Substrate-binding positions include 15 to 17 and N41; that span reads HFR. 3 residues coordinate Zn(2+): K98, H135, and H173. K98 bears the N6-carboxylysine mark. H135 is a binding site for substrate. L218 serves as a coordination point for substrate. D246 contacts Zn(2+). D246 is an active-site residue. Substrate-binding residues include H250 and A262.

Belongs to the metallo-dependent hydrolases superfamily. DHOase family. Class II DHOase subfamily. Homodimer. Zn(2+) is required as a cofactor.

It catalyses the reaction (S)-dihydroorotate + H2O = N-carbamoyl-L-aspartate + H(+). It participates in pyrimidine metabolism; UMP biosynthesis via de novo pathway; (S)-dihydroorotate from bicarbonate: step 3/3. In terms of biological role, catalyzes the reversible cyclization of carbamoyl aspartate to dihydroorotate. The polypeptide is Dihydroorotase (Shewanella frigidimarina (strain NCIMB 400)).